The following is a 259-amino-acid chain: Cobalt-precorrin-4 C(11)-methyltransferase (259 aa).

Belongs to the precorrin methyltransferase family.

It catalyses the reaction Co-precorrin-4 + S-adenosyl-L-methionine = Co-precorrin-5A + S-adenosyl-L-homocysteine + H(+). It participates in cofactor biosynthesis; adenosylcobalamin biosynthesis; cob(II)yrinate a,c-diamide from sirohydrochlorin (anaerobic route): step 4/10. Its function is as follows. Catalyzes the methylation of C-11 in cobalt-precorrin-4 to form cobalt-precorrin-5A. This chain is Cobalt-precorrin-4 C(11)-methyltransferase (cbiF), found in Methanocaldococcus jannaschii (strain ATCC 43067 / DSM 2661 / JAL-1 / JCM 10045 / NBRC 100440) (Methanococcus jannaschii).